The chain runs to 37 residues: Peptide encoded by miPEP164a (37 aa).

In terms of biological role, regulatory peptide encoded by the primary transcript (pri-miR164a) of the microRNA miR164a that enhances the accumulation of its corresponding mature miRNA. Acts probably as a transcriptional activator of its corresponding pri-miRNA. This is Peptide encoded by miPEP164a from Arabidopsis thaliana (Mouse-ear cress).